Reading from the N-terminus, the 101-residue chain is Integration host factor subunit beta (101 aa).

This sequence belongs to the bacterial histone-like protein family. In terms of assembly, heterodimer of an alpha and a beta chain.

Functionally, this protein is one of the two subunits of integration host factor, a specific DNA-binding protein that functions in genetic recombination as well as in transcriptional and translational control. The protein is Integration host factor subunit beta of Rhodopseudomonas palustris (strain BisB5).